The sequence spans 897 residues: MAQVDVTRWVIHPSGSYESETRKRKLREEKRRKLNEIKRASLVLNDSDFKNFEHWLVTSKGVGEYEQVFDFNFDAYTTRGKPAVDSSTSYSDNIFIDGDKNCKIDTKTISFLDRKYQSNNQTKIESEKQMHVITLKNEQLIEECKNIRERLLELIREGTGYIFVRGWTGYRVNTIILKCHCKQDKCHQILKPRCNVKKHHDPDNLKQFNCFSSFSVHFNVKLNTIKICFCHKSKHETLPITIIPASLRQYISTNLCFTARECFECLKRTPVYLEFTKSFDAKAIVRKIWKEISESQWNLDPDSKRSASKILKRFQNTGDVALLPVDNCSADLNISLQKAKPIAFIYERIISEIQHDVTEIVIDSTFCLSTDYKQYFVVVASFFGKGVPVGFMATETNNVDHLTILWFLRSVLQKLPKVKCINSDWSLAEIKAINLLKCSNQICLFHTLTAIRCKRLASKKNMTESLFHQQFQSLLNYEWVDDNIFDPTRYEEKYQEKVSEYQIREIVRLVRIAICDHILLHSAGLNKVFQDSDSENVKVLKLYEYHLKQLYVITVQKFSLPCYFCYLFNQYYNFTSFQIMSRVGKPTFFSVLRTSMMCESYFNQLKSWNLSGSRNYRFDTLIYILLNKEVAKIKESIRITKKFEKEYDSNCLVQNHRKHLPTWRKQWIIEWKNILQELNCLQEKDVFNECQQYGTNMTTWICGCNDAKVSPSSTCIHLVSLYKQKFPFYHGYTLQRFGKRNNGVPLVQHESLQSDTKIESTENMSFEISDVTINGVCNTTKQMSDANCRKLDYETEIDMISENKHSEIDDESEGKLRIFNFFLADEETRLLITQCPSFKSIIEEMTYIKQRTQSEPQWKAKTNKPEKGFKYDSWIRCLKYYQCYADVKANGNFPLPF.

In terms of biological role, mating type proteins are sequence specific DNA-binding proteins that act as master switches in yeast differentiation by controlling gene expression in a cell type-specific fashion. Required for efficient mating as an alpha-cell. This is Mating-type protein ALPHA3 (HMLALPHA3) from Kluyveromyces lactis (strain ATCC 8585 / CBS 2359 / DSM 70799 / NBRC 1267 / NRRL Y-1140 / WM37) (Yeast).